We begin with the raw amino-acid sequence, 595 residues long: Aspartate--tRNA ligase (595 aa).

L-aspartate is bound at residue Glu171. The tract at residues 195-198 (QLFK) is aspartate. Arg217 is an L-aspartate binding site. ATP is bound by residues 217–219 (RDE) and Gln226. Residue His448 coordinates L-aspartate. ATP is bound at residue Glu482. Arg489 is a binding site for L-aspartate. 534–537 (GLDR) contacts ATP.

The protein belongs to the class-II aminoacyl-tRNA synthetase family. Type 1 subfamily. In terms of assembly, homodimer.

It localises to the cytoplasm. The catalysed reaction is tRNA(Asp) + L-aspartate + ATP = L-aspartyl-tRNA(Asp) + AMP + diphosphate. Its function is as follows. Catalyzes the attachment of L-aspartate to tRNA(Asp) in a two-step reaction: L-aspartate is first activated by ATP to form Asp-AMP and then transferred to the acceptor end of tRNA(Asp). This is Aspartate--tRNA ligase from Erwinia tasmaniensis (strain DSM 17950 / CFBP 7177 / CIP 109463 / NCPPB 4357 / Et1/99).